A 337-amino-acid polypeptide reads, in one-letter code: tRNA N6-adenosine threonylcarbamoyltransferase (337 aa).

2 residues coordinate Fe cation: histidine 111 and histidine 115. Substrate contacts are provided by residues leucine 134–glycine 138, aspartate 167, glycine 180, and asparagine 272. Aspartate 300 contacts Fe cation.

The protein belongs to the KAE1 / TsaD family. Fe(2+) is required as a cofactor.

It localises to the cytoplasm. It carries out the reaction L-threonylcarbamoyladenylate + adenosine(37) in tRNA = N(6)-L-threonylcarbamoyladenosine(37) in tRNA + AMP + H(+). In terms of biological role, required for the formation of a threonylcarbamoyl group on adenosine at position 37 (t(6)A37) in tRNAs that read codons beginning with adenine. Is involved in the transfer of the threonylcarbamoyl moiety of threonylcarbamoyl-AMP (TC-AMP) to the N6 group of A37, together with TsaE and TsaB. TsaD likely plays a direct catalytic role in this reaction. The sequence is that of tRNA N6-adenosine threonylcarbamoyltransferase from Nitrosomonas europaea (strain ATCC 19718 / CIP 103999 / KCTC 2705 / NBRC 14298).